The chain runs to 446 residues: Na(+)-translocating NADH-quinone reductase subunit A (446 aa).

It belongs to the NqrA family. In terms of assembly, composed of six subunits; NqrA, NqrB, NqrC, NqrD, NqrE and NqrF.

It catalyses the reaction a ubiquinone + n Na(+)(in) + NADH + H(+) = a ubiquinol + n Na(+)(out) + NAD(+). Its function is as follows. NQR complex catalyzes the reduction of ubiquinone-1 to ubiquinol by two successive reactions, coupled with the transport of Na(+) ions from the cytoplasm to the periplasm. NqrA to NqrE are probably involved in the second step, the conversion of ubisemiquinone to ubiquinol. The protein is Na(+)-translocating NADH-quinone reductase subunit A of Aliivibrio salmonicida (strain LFI1238) (Vibrio salmonicida (strain LFI1238)).